Reading from the N-terminus, the 791-residue chain is GDH/6PGL endoplasmic bifunctional protein (791 aa).

A signal peptide spans 1–19; it reads MWNMLIVAMCLALLGCLQA. Q20 carries the pyrrolidone carboxylic acid modification. The segment at 20–526 is hexose-6-phosphate dehydrogenase; sequence QELQGHVSII…SGRLFFSQQQ (507 aa). NADP(+) contacts are provided by residues 32–39 and Y149; that span reads GATGDLAK. N157 is a glycosylation site (N-linked (GlcNAc...) asparagine). K174 is an NADP(+) binding site. D-glucose 6-phosphate-binding positions include K174, 204-208, E243, and D262; that span reads HYLGK. N6-succinyllysine is present on K208. Residue H267 is the Proton acceptor of the active site. N282 carries N-linked (GlcNAc...) asparagine glycosylation. Residues K360 and R365 each contribute to the D-glucose 6-phosphate site. R370 contacts NADP(+). Residues 527–540 are linker; it reads PEQLVPGPGPAPMP. Residues 541–791 form a 6-phosphogluconolactonase region; sequence SDFQVLRAKY…WYMDYDAFLG (251 aa). Residue W617 participates in NADP(+) binding. N-linked (GlcNAc...) asparagine glycosylation is present at N683.

In the N-terminal section; belongs to the glucose-6-phosphate dehydrogenase family. This sequence in the C-terminal section; belongs to the glucosamine/galactosamine-6-phosphate isomerase family. 6-phosphogluconolactonase subfamily. As to quaternary structure, homodimer. As to expression, present in most tissues examined, strongest in liver.

It localises to the endoplasmic reticulum lumen. The catalysed reaction is D-glucose 6-phosphate + NADP(+) = 6-phospho-D-glucono-1,5-lactone + NADPH + H(+). It catalyses the reaction D-glucose 6-phosphate + NAD(+) = 6-phospho-D-glucono-1,5-lactone + NADH + H(+). The enzyme catalyses 6-phospho-D-glucono-1,5-lactone + H2O = 6-phospho-D-gluconate + H(+). It carries out the reaction 2-deoxy-D-glucose 6-phosphate + NAD(+) = 2-deoxy-6-phospho-D-glucono-1,5-lactone + NADH + H(+). The catalysed reaction is 2-deoxy-D-glucose 6-phosphate + NADP(+) = 2-deoxy-6-phospho-D-glucono-1,5-lactone + NADPH + H(+). It catalyses the reaction D-galactose 6-phosphate + NADP(+) = 6-phospho-D-galactono-1,5-lactone + NADPH + H(+). The enzyme catalyses D-galactose 6-phosphate + NAD(+) = 6-phospho-D-galactono-1,5-lactone + NADH + H(+). It carries out the reaction D-glucosamine 6-phosphate + NADP(+) = 2-amino-2-deoxy-6-phospho-D-glucono-1,5-lactone + NADPH + 2 H(+). The catalysed reaction is D-glucose + NAD(+) = D-glucono-1,5-lactone + NADH + H(+). It catalyses the reaction D-glucose + NADP(+) = D-glucono-1,5-lactone + NADPH + H(+). The enzyme catalyses D-glucose 6-sulfate + NADP(+) = 6-sulfo-D-glucono-1,5-lactone + NADPH + H(+). It participates in carbohydrate degradation; pentose phosphate pathway; D-ribulose 5-phosphate from D-glucose 6-phosphate (oxidative stage): step 1/3. Its pathway is carbohydrate degradation; pentose phosphate pathway; D-ribulose 5-phosphate from D-glucose 6-phosphate (oxidative stage): step 2/3. It functions in the pathway carbohydrate degradation; pentose phosphate pathway; D-ribulose 5-phosphate from D-glucose 6-phosphate (oxidative stage). Its function is as follows. Bifunctional enzyme localized in the lumen of the endoplasmic reticulum that catalyzes the first two steps of the oxidative branch of the pentose phosphate pathway/shunt, an alternative to glycolysis and a major source of reducing power and metabolic intermediates for biosynthetic processes. Has a hexose-6-phosphate dehydrogenase activity, with broad substrate specificity compared to glucose-6-phosphate 1-dehydrogenase/G6PD, and catalyzes the first step of the pentose phosphate pathway. In addition, acts as a 6-phosphogluconolactonase and catalyzes the second step of the pentose phosphate pathway. May have a dehydrogenase activity for alternative substrates including glucosamine 6-phosphate and glucose 6-sulfate. The main function of this enzyme is to provide reducing equivalents such as NADPH to maintain the adequate levels of reductive cofactors in the oxidizing environment of the endoplasmic reticulum. By producing NADPH that is needed by reductases of the lumen of the endoplasmic reticulum like corticosteroid 11-beta-dehydrogenase isozyme 1/HSD11B1, indirectly regulates their activity. This Homo sapiens (Human) protein is GDH/6PGL endoplasmic bifunctional protein.